The sequence spans 522 residues: 2-isopropylmalate synthase (522 aa).

One can recognise a Pyruvate carboxyltransferase domain in the interval Val5–Tyr267. Positions 14, 202, 204, and 238 each coordinate Mn(2+). The tract at residues Arg392–Val522 is regulatory domain.

The protein belongs to the alpha-IPM synthase/homocitrate synthase family. LeuA type 1 subfamily. Homodimer. Mn(2+) serves as cofactor.

The protein localises to the cytoplasm. It carries out the reaction 3-methyl-2-oxobutanoate + acetyl-CoA + H2O = (2S)-2-isopropylmalate + CoA + H(+). Its pathway is amino-acid biosynthesis; L-leucine biosynthesis; L-leucine from 3-methyl-2-oxobutanoate: step 1/4. In terms of biological role, catalyzes the condensation of the acetyl group of acetyl-CoA with 3-methyl-2-oxobutanoate (2-ketoisovalerate) to form 3-carboxy-3-hydroxy-4-methylpentanoate (2-isopropylmalate). The protein is 2-isopropylmalate synthase of Erwinia tasmaniensis (strain DSM 17950 / CFBP 7177 / CIP 109463 / NCPPB 4357 / Et1/99).